We begin with the raw amino-acid sequence, 46 residues long: Phoratoxin (46 aa).

3 disulfide bridges follow: C3/C40, C4/C32, and C16/C26. H46 is modified (blocked carboxyl end (His)).

Belongs to the plant thionin (TC 1.C.44) family.

The protein resides in the secreted. Functionally, thionins are small plant proteins which are toxic to animal cells. They seem to exert their toxic effect at the level of the cell membrane. Their precise function is not known. This Phoradendron leucarpum subsp. tomentosum (California mistletoe) protein is Phoratoxin.